The primary structure comprises 250 residues: MANLRVEVISLFPEMFSAISEYGITSRAVKQGLLQLTCWNPRDYTTDRHHTVDDRPFGGGPGMVMKIKPLEDALVQARNAAGEGAKVIYLSPQGRQLNQSAVRELANEDALILIAGRYEGIDERFIDAHVDEEWSIGDYVLSGGELPAMVLIDAVTRLLPGALGHVDSAEEDSFTDGLLDCPHYTRPEVYADQRVPDVLLSGNHAHIRRWRLQQSLGRTYERRADLLESRSLSGEEKKLLEEYLRERDDS.

S-adenosyl-L-methionine-binding positions include G116 and 136-141 (IGDYVL).

The protein belongs to the RNA methyltransferase TrmD family. As to quaternary structure, homodimer.

The protein resides in the cytoplasm. It carries out the reaction guanosine(37) in tRNA + S-adenosyl-L-methionine = N(1)-methylguanosine(37) in tRNA + S-adenosyl-L-homocysteine + H(+). Specifically methylates guanosine-37 in various tRNAs. In Pseudomonas fluorescens (strain ATCC BAA-477 / NRRL B-23932 / Pf-5), this protein is tRNA (guanine-N(1)-)-methyltransferase.